The chain runs to 2161 residues: SH3 and multiple ankyrin repeat domains protein 1 (2161 aa).

A disordered region spans residues 1–53 (MTHSPATSEDEERHSASECPEGGSESDSSPDGPGRGPRGTRGQGSGAPGSLAS). Over residues 17-32 (SECPEGGSESDSSPDG) the composition is skewed to low complexity. Gly residues predominate over residues 33–47 (PGRGPRGTRGQGSGA). Tyr186 is subject to Phosphotyrosine. 6 ANK repeats span residues 212–245 (SGET…FRAR), 246–278 (DGMT…YKDR), 279–312 (RGLT…IADE), 313–345 (NGWQ…AQNA), 346–378 (SGNT…VKNN), and 379–395 (NGQT…NFEL). 2 disordered regions span residues 412-433 (ESPK…VPPA) and 455-546 (GAAS…SRGR). A compositionally biased stretch (low complexity) spans 455–479 (GAASSGAPGPTSGSQGQSQPSAPTT). The segment covering 527–542 (PAGGTGGSGGPGGSLG) has biased composition (gly residues). A Phosphoserine modification is found at Ser540. The residue at position 544 (Arg544) is an Omega-N-methylarginine. An SH3 domain is found at 554 to 613 (VPGRSFMAVKSYQAQAEGEISLSKGEKIKVLSIGEGGFWEGQVKGRVGWFPSDCLEEVAN). Residues 663-757 (TVLLQKKDSE…TLMVKVVMVT (95 aa)) enclose the PDZ domain. A phosphoserine mark is found at Ser671 and Ser791. The disordered stretch occupies residues 832-886 (TISASESPGPGGLASLGKHRPKGFFATESSFDPHHRAQPSYERPSFLPPGPGLML). Phosphoserine is present on Ser890. Disordered regions lie at residues 909–1229 (SRSL…LDFT), 1241–1289 (RREG…KSID), 1353–1720 (LGLA…GVAS), 1734–1785 (GQAF…PTSP), 1827–1860 (LPTA…QPQA), 1892–1983 (PWAR…TRHL), and 1996–2023 (RRAP…LPIL). A compositionally biased stretch (pro residues) spans 920 to 939 (IPPPPTTSPPEPPYSTPPVP). Arg950 is subject to Omega-N-methylarginine. A compositionally biased stretch (basic residues) spans 996-1020 (AHHHPPHHHHHHAPPPQPHHHHAHP). Arg1051, Arg1090, and Arg1101 each carry omega-N-methylarginine. A compositionally biased stretch (pro residues) spans 1127–1144 (PPAPSPTSPASPQPPPAV). Residues 1164–1181 (STSSSGRSSQGSSTEAEP) are compositionally biased toward low complexity. Positions 1199-1220 (SPAPAMSPVPPSPSPVPTPASP) are enriched in pro residues. Over residues 1241–1252 (RREGGWQNEARR) the composition is skewed to basic and acidic residues. Arg1253 carries the post-translational modification Asymmetric dimethylarginine. Ser1287 is modified (phosphoserine). A compositionally biased stretch (basic and acidic residues) spans 1359 to 1368 (ARERALKESS). Positions 1374–1391 (PQPPPRPPSPRYEAPPPT) are enriched in pro residues. Arg1423 is subject to Omega-N-methylarginine. Ser1436 is modified (phosphoserine). Pro residues-rich tracts occupy residues 1517 to 1532 (GVPP…PSPT) and 1583 to 1609 (PLTP…PPPA). Polar residues predominate over residues 1618-1636 (DSTASSLTSYDSEVATLTQ). The span at 1644 to 1670 (DPHPPGPPAPAAPAPAAPQPGPDPPPG) shows a compositional bias: pro residues. Residues 1678–1688 (VDSRSSSDHPL) show a composition bias toward basic and acidic residues. Low complexity predominate over residues 1692 to 1702 (SSASTLSSLSA). Composition is skewed to gly residues over residues 1703 to 1718 (EGGG…GAGV) and 1764 to 1774 (ASGGLRPGPSG). A compositionally biased stretch (low complexity) spans 1775–1785 (GLRDPVTPTSP). Over residues 1844-1855 (PGPPPPPLPGPL) the composition is skewed to pro residues. Omega-N-methylarginine is present on Arg1895. Low complexity-rich tracts occupy residues 1917–1940 (SSLQ…VSSL), 1954–1980 (TGTG…STST), and 1996–2006 (RRAPSPSLLPA). Residues Arg2016, Arg2036, and Arg2074 each carry the omega-N-methylarginine modification. The SAM domain occupies 2098 to 2161 (WTKFDVADWL…DRALKFFLER (64 aa)).

Belongs to the SHANK family. In terms of assembly, may homomultimerize via its SAM domain. Interacts with the C-terminus of SSTR2 via the PDZ domain. Interacts with IGSF9, SHARPIN, SPTAN1, HOMER1 and DLGAP1/GKAP isoforms 1 and 2. Part of a complex with DLG4/PSD-95 and DLGAP1/GKAP. Interacts with BAIAP2. Interacts with HOMER1 and HOMER3. As to expression, expressed in brain particularly in the amygdala, hippocampus, substantia nigra and thalamus. Isoform 2 seems to be expressed ubiquitously.

The protein localises to the cytoplasm. The protein resides in the postsynaptic density. It localises to the synapse. In terms of biological role, seems to be an adapter protein in the postsynaptic density (PSD) of excitatory synapses that interconnects receptors of the postsynaptic membrane including NMDA-type and metabotropic glutamate receptors via complexes with GKAP/PSD-95 and Homer, respectively, and the actin-based cytoskeleton. Plays a role in the structural and functional organization of the dendritic spine and synaptic junction. The polypeptide is SH3 and multiple ankyrin repeat domains protein 1 (SHANK1) (Homo sapiens (Human)).